The primary structure comprises 217 residues: Ran-binding protein 1 homolog b (217 aa).

Disordered regions lie at residues 1–32 (MASISNEPERENRDEEETGANEDEDTGAQVAP) and 160–217 (ESEE…VPSA). Alanine 2 is modified (N-acetylalanine). Residues 14–26 (DEEETGANEDEDT) are compositionally biased toward acidic residues. The RanBD1 domain occupies 29–164 (QVAPIVRLEE…FKEVAESEEE (136 aa)). Basic and acidic residues predominate over residues 181-217 (LTVEEKESEKKPVEKAEENKKSEAVEEKKTEESVPSA).

As to quaternary structure, interacts with the GTP-bound form of RAN1, RAN2 and RAN3.

The protein resides in the nucleus. It is found in the nuclear pore complex. This Arabidopsis thaliana (Mouse-ear cress) protein is Ran-binding protein 1 homolog b (RANBP1B).